The sequence spans 402 residues: Nicotinate phosphoribosyltransferase (402 aa).

A Phosphohistidine; by autocatalysis modification is found at His-224.

It belongs to the NAPRTase family. In terms of processing, transiently phosphorylated on a His residue during the reaction cycle. Phosphorylation strongly increases the affinity for substrates and increases the rate of nicotinate D-ribonucleotide production. Dephosphorylation regenerates the low-affinity form of the enzyme, leading to product release.

It catalyses the reaction nicotinate + 5-phospho-alpha-D-ribose 1-diphosphate + ATP + H2O = nicotinate beta-D-ribonucleotide + ADP + phosphate + diphosphate. The protein operates within cofactor biosynthesis; NAD(+) biosynthesis; nicotinate D-ribonucleotide from nicotinate: step 1/1. Functionally, catalyzes the synthesis of beta-nicotinate D-ribonucleotide from nicotinate and 5-phospho-D-ribose 1-phosphate at the expense of ATP. This is Nicotinate phosphoribosyltransferase from Neisseria meningitidis serogroup C (strain 053442).